Here is a 64-residue protein sequence, read N- to C-terminus: uncharacterized protein (64 aa).

A helical membrane pass occupies residues 41 to 61; that stretch reads VFLALKVLGIMVLFYLLDAII.

The protein resides in the membrane. This is an uncharacterized protein from Acheta domesticus (House cricket).